The primary structure comprises 110 residues: UPF0367 protein Syncc9605_2376 (110 aa).

This sequence belongs to the UPF0367 family.

This is UPF0367 protein Syncc9605_2376 from Synechococcus sp. (strain CC9605).